We begin with the raw amino-acid sequence, 537 residues long: Periplasmic murein peptide-binding protein MppA (537 aa).

The N-terminal stretch at 1–22 is a signal peptide; sequence MKHSVSVTCCALLVSSISLSYA. Residues K42, V54, L56, Q289, R424, S435, V437, D439, and T506 each coordinate L-alanyl-gamma-D-glutamyl-meso-2,6-diaminopimelate.

Belongs to the bacterial solute-binding protein 5 family. In terms of assembly, the complex is composed of two ATP-binding proteins (OppD and OppF), two transmembrane proteins (OppB and OppC) and a solute-binding protein (MppA).

Its subcellular location is the periplasm. Functionally, part of the ABC transporter complex MppA-OppBCDF involved in the uptake of the cell wall murein tripeptide L-alanyl-gamma-D-glutamyl-meso-diaminopimelate. Is involved in the recycling of cell wall peptides. Binds the cell wall peptide L-Ala-D-Gly-gamma-meso-diaminopimelic acid. Can also transport ordinary alpha-linked tripeptides such as Pro-Phe-Lys, but with much lower efficiency than OppA. Cannot bind typical tripeptides such as Lys-Glu-Lys, Lys-Lys-Lys or Ala-Ala-Ala. This chain is Periplasmic murein peptide-binding protein MppA, found in Escherichia coli (strain K12).